The following is a 233-amino-acid chain: Orotidine 5'-phosphate decarboxylase (233 aa).

Substrate contacts are provided by residues aspartate 9, lysine 31, 58-67, threonine 120, arginine 182, glutamine 191, glycine 211, and arginine 212; that span reads DLKLHDIPNT. Lysine 60 acts as the Proton donor in catalysis.

The protein belongs to the OMP decarboxylase family. Type 1 subfamily. As to quaternary structure, homodimer.

It catalyses the reaction orotidine 5'-phosphate + H(+) = UMP + CO2. It functions in the pathway pyrimidine metabolism; UMP biosynthesis via de novo pathway; UMP from orotate: step 2/2. Functionally, catalyzes the decarboxylation of orotidine 5'-monophosphate (OMP) to uridine 5'-monophosphate (UMP). The sequence is that of Orotidine 5'-phosphate decarboxylase from Listeria innocua serovar 6a (strain ATCC BAA-680 / CLIP 11262).